We begin with the raw amino-acid sequence, 739 residues long: NAD(P)H-quinone oxidoreductase subunit 5, chloroplastic (739 aa).

Helical transmembrane passes span 9–29 (LIIPFALLPVPMLIGVALIFF), 40–60 (WAFPSVLLLSIVMIFSFNLSI), 89–109 (IDSLTSIMLILITTVGILVLI), 125–145 (FAYMSFSNISMLGLVTSSNLI), 147–167 (IHIFWELVGVCSYLLIGFWFT), 185–205 (GDFGLLLGILGFYWITGSFEF), 224–244 (LFVILCASLLFVGAVAKSAQF), 258–278 (TPISALIHAATMVAAGIFLVA), 283–303 (LFTVIPYIMNIISLIGIITIL), 327–347 (LGYIMLALGMGSYRAALFHLI), 354–374 (ALLFLGSGSIIHSMESIVGYS), 396–416 (TAFFLGTLSLCGIPPLACFWS), 425–445 (WLYSPIFAIIACSTAGLTAFY), 546–566 (LFPLLVLVLFTFFVGSIGIPF), 605–625 (IFSVSIAYFGIFISSFLYRPI), and 718–738 (ISSYLFLYLFSVSIFFLIFQV).

The protein belongs to the complex I subunit 5 family. As to quaternary structure, NDH is composed of at least 16 different subunits, 5 of which are encoded in the nucleus.

The protein resides in the plastid. The protein localises to the chloroplast thylakoid membrane. It catalyses the reaction a plastoquinone + NADH + (n+1) H(+)(in) = a plastoquinol + NAD(+) + n H(+)(out). It carries out the reaction a plastoquinone + NADPH + (n+1) H(+)(in) = a plastoquinol + NADP(+) + n H(+)(out). Its function is as follows. NDH shuttles electrons from NAD(P)H:plastoquinone, via FMN and iron-sulfur (Fe-S) centers, to quinones in the photosynthetic chain and possibly in a chloroplast respiratory chain. The immediate electron acceptor for the enzyme in this species is believed to be plastoquinone. Couples the redox reaction to proton translocation, and thus conserves the redox energy in a proton gradient. The sequence is that of NAD(P)H-quinone oxidoreductase subunit 5, chloroplastic (ndhF) from Buxus microphylla (Littleleaf boxwood).